The primary structure comprises 503 residues: 11-hydroxysugiol 20-monooxygenase (503 aa).

Residues Gln-2–Ser-22 traverse the membrane as a helical segment. Cys-446 lines the heme pocket.

It belongs to the cytochrome P450 family. Requires heme as cofactor. As to expression, highly expressed in roots.

Its subcellular location is the membrane. The catalysed reaction is 11-hydroxysugiol + reduced [NADPH--hemoprotein reductase] + O2 = 11,20-dihydroxysugiol + oxidized [NADPH--hemoprotein reductase] + H2O + H(+). The enzyme catalyses 11-hydroxyferruginol + reduced [NADPH--hemoprotein reductase] + O2 = 11,20-dihydroxyferruginol + oxidized [NADPH--hemoprotein reductase] + H2O + H(+). The protein operates within secondary metabolite biosynthesis; terpenoid biosynthesis. Its function is as follows. Monooxygenase that oxidizes 11-hydroxysugiol to produce 11,20-dihydroxysugiol. Can oxidize 11-hydroxyferruginol to produce 11,20-dihydroxyferruginol. These products are intermediates in tanshinone biosynthesis. This is 11-hydroxysugiol 20-monooxygenase from Salvia miltiorrhiza (Chinese sage).